We begin with the raw amino-acid sequence, 177 residues long: uncharacterized protein (177 aa).

Positions 1-27 (MSHSRRAAPTQDQCHTPGFPTSRETSG) are disordered.

This is an uncharacterized protein from Homo sapiens (Human).